The sequence spans 312 residues: Malate dehydrogenase (312 aa).

Residues 12–17 (GAGFTG) and Asp-36 each bind NAD(+). The substrate site is built by Arg-87 and Arg-93. Residues Asn-100 and 123 to 125 (LTN) contribute to the NAD(+) site. Asn-125 serves as a coordination point for substrate. Ser-149 carries the phosphoserine modification. Arg-156 provides a ligand contact to substrate. The active-site Proton acceptor is the His-180.

It belongs to the LDH/MDH superfamily. MDH type 3 family.

It catalyses the reaction (S)-malate + NAD(+) = oxaloacetate + NADH + H(+). Its function is as follows. Catalyzes the reversible oxidation of malate to oxaloacetate. The sequence is that of Malate dehydrogenase (mdh) from Bacillus subtilis (strain 168).